Reading from the N-terminus, the 458-residue chain is Flap endonuclease 1 (458 aa).

Positions 1 to 105 are N-domain; it reads MGIKGLTGLL…GVLSKRFEKR (105 aa). D34 lines the Mg(2+) pocket. The DNA site is built by R47 and R71. Mg(2+) is bound by residues D87, E159, E161, D180, and D182. Residues 123 to 254 form an I-domain region; that stretch reads DVDRFSRRTV…KSALKLIREF (132 aa). E159 contacts DNA. Residues G232 and D234 each coordinate DNA. Residue D234 participates in Mg(2+) binding. 2 disordered regions span residues 268-347 and 416-458; these read AAAR…IPDE and GFFT…AKKK. Acidic residues-rich tracts occupy residues 275–285 and 293–309; these read AEEEDEEEAEE and EMPD…DEEE. Residues 310–329 show a composition bias toward basic and acidic residues; it reads AERRKKAEAAKKKKAQEKAK. The segment at 410-418 is interaction with PCNA; it reads QQGRLDGFF. A compositionally biased stretch (basic and acidic residues) spans 442-452; sequence RKGEDKAEGSG.

Belongs to the XPG/RAD2 endonuclease family. FEN1 subfamily. Interacts with PCNA. Three molecules of FEN1 bind to one PCNA trimer with each molecule binding to one PCNA monomer. PCNA stimulates the nuclease activity without altering cleavage specificity. It depends on Mg(2+) as a cofactor. In terms of processing, phosphorylated. Phosphorylation upon DNA damage induces relocalization to the nuclear plasma.

Its subcellular location is the nucleus. It is found in the nucleolus. The protein localises to the nucleoplasm. It localises to the mitochondrion. Its function is as follows. Structure-specific nuclease with 5'-flap endonuclease and 5'-3' exonuclease activities involved in DNA replication and repair. During DNA replication, cleaves the 5'-overhanging flap structure that is generated by displacement synthesis when DNA polymerase encounters the 5'-end of a downstream Okazaki fragment. It enters the flap from the 5'-end and then tracks to cleave the flap base, leaving a nick for ligation. Also involved in the long patch base excision repair (LP-BER) pathway, by cleaving within the apurinic/apyrimidinic (AP) site-terminated flap. Acts as a genome stabilization factor that prevents flaps from equilibrating into structures that lead to duplications and deletions. Also possesses 5'-3' exonuclease activity on nicked or gapped double-stranded DNA, and exhibits RNase H activity. Also involved in replication and repair of rDNA and in repairing mitochondrial DNA. In Coprinopsis cinerea (strain Okayama-7 / 130 / ATCC MYA-4618 / FGSC 9003) (Inky cap fungus), this protein is Flap endonuclease 1.